A 172-amino-acid polypeptide reads, in one-letter code: Transcriptional repressor NrdR (172 aa).

A zinc finger lies at 3–34; the sequence is CPFCGEADTKVIDSRLVAEGDQVRRRRECLSC. In terms of domain architecture, ATP-cone spans 49–139; the sequence is PRVVKQDGTR…VYRSFQDINE (91 aa).

The protein belongs to the NrdR family. It depends on Zn(2+) as a cofactor.

Negatively regulates transcription of bacterial ribonucleotide reductase nrd genes and operons by binding to NrdR-boxes. In Marinobacter nauticus (strain ATCC 700491 / DSM 11845 / VT8) (Marinobacter aquaeolei), this protein is Transcriptional repressor NrdR.